Consider the following 59-residue polypeptide: Antitoxin RelB4 (59 aa).

A disordered region spans residues 38-59 (VGEWLKTLGTPHQTPPPYSWRK). Positions 50 to 59 (QTPPPYSWRK) are enriched in pro residues.

Antitoxin component of a type II toxin-antitoxin (TA) system. Neutralizes the effect of cognate toxin RelE4, but no other RelE or ParE toxin. The chain is Antitoxin RelB4 (relB4) from Caulobacter vibrioides (strain ATCC 19089 / CIP 103742 / CB 15) (Caulobacter crescentus).